The primary structure comprises 123 residues: Holo-[acyl-carrier-protein] synthase (123 aa).

Residues Asp8 and Glu56 each contribute to the Mg(2+) site.

This sequence belongs to the P-Pant transferase superfamily. AcpS family. The cofactor is Mg(2+).

It is found in the cytoplasm. It catalyses the reaction apo-[ACP] + CoA = holo-[ACP] + adenosine 3',5'-bisphosphate + H(+). Transfers the 4'-phosphopantetheine moiety from coenzyme A to a Ser of acyl-carrier-protein. The chain is Holo-[acyl-carrier-protein] synthase from Clostridium beijerinckii (strain ATCC 51743 / NCIMB 8052) (Clostridium acetobutylicum).